A 927-amino-acid polypeptide reads, in one-letter code: Heat shock protein hsp98 (927 aa).

One can recognise a Clp R domain in the interval Thr-2–Thr-162. Repeat regions lie at residues Phe-7–Leu-87 and Met-99–Thr-162. The tract at residues Leu-179–Pro-428 is NBD1. Gly-224–Thr-231 serves as a coordination point for ATP. The stretch at Glu-429–Thr-553 forms a coiled coil. Positions Glu-454–Glu-473 are disordered. Residues Val-562–Ala-752 are NBD2. Gly-635–Thr-642 contacts ATP. The segment at Glu-908–Asp-927 is disordered.

The protein belongs to the ClpA/ClpB family. As to quaternary structure, homohexamer, forming a ring with a central pore.

It localises to the cytoplasm. Its subcellular location is the nucleus. Functionally, required, in concert with Hsp40 and Hsp70 and small Hsps, for the dissociation, resolubilization and refolding of aggregates of damaged proteins after heat or other environmental stresses. Extracts proteins from aggregates by unfolding and threading them in an ATP-dependent process through the axial channel of the protein hexamer, after which they can be refolded by components of the Hsp70/Hsp40 chaperone system. The chain is Heat shock protein hsp98 (hsp98) from Neurospora crassa (strain ATCC 24698 / 74-OR23-1A / CBS 708.71 / DSM 1257 / FGSC 987).